A 305-amino-acid polypeptide reads, in one-letter code: NADH-cytochrome b5 reductase 1 (305 aa).

A helical transmembrane segment spans residues 8 to 28; the sequence is VLLASLGVGLVTLLGLAVGSY. Residues 44 to 156 form the FAD-binding FR-type domain; sequence NEKYLLRLLD…RGPSGLLTYT (113 aa). Residues 136-166 and 175-210 each bind FAD; these read DSLK…IQPN and VAKK…QCFL.

This sequence belongs to the flavoprotein pyridine nucleotide cytochrome reductase family. FAD serves as cofactor. Widely expressed.

The protein resides in the membrane. The enzyme catalyses 2 Fe(III)-[cytochrome b5] + NADH = 2 Fe(II)-[cytochrome b5] + NAD(+) + H(+). Functionally, NADH-cytochrome b5 reductases are involved in desaturation and elongation of fatty acids, cholesterol biosynthesis, drug metabolism, and, in erythrocyte, methemoglobin reduction. The chain is NADH-cytochrome b5 reductase 1 (CYB5R1) from Homo sapiens (Human).